Reading from the N-terminus, the 286-residue chain is Expansin-B4 (286 aa).

The first 24 residues, 1 to 24, serve as a signal peptide directing secretion; sequence MGSLSSLAAAAVFLSLLAVGHCAA. N-linked (GlcNAc...) asparagine glycans are attached at residues Asn-28 and Asn-44. Positions 75-181 constitute an Expansin-like EG45 domain; sequence GGACGFKHTN…TRVPCEFPGL (107 aa). Intrachain disulfides connect Cys-78-Cys-106, Cys-109-Cys-176, and Cys-114-Cys-120. Residues 194 to 281 form the Expansin-like CBD domain; it reads VYFAVLVEYE…NWRPNTFYRS (88 aa). Asn-257 carries N-linked (GlcNAc...) asparagine glycosylation.

This sequence belongs to the expansin family. Expansin B subfamily. Expressed in internodes.

Its subcellular location is the secreted. The protein localises to the cell wall. It is found in the membrane. May cause loosening and extension of plant cell walls by disrupting non-covalent bonding between cellulose microfibrils and matrix glucans. No enzymatic activity has been found. May be required for rapid internodal elongation in deepwater rice during submergence. In Oryza sativa subsp. japonica (Rice), this protein is Expansin-B4 (EXPB4).